The sequence spans 650 residues: ATP-binding cassette sub-family G member 3 (650 aa).

Over 1 to 387 (MASNNDPTVI…KNFKGFPWVT (387 aa)) the chain is Cytoplasmic. Residues 37–279 (LSFHNISYQE…FRSAGYNYES (243 aa)) enclose the ABC transporter domain. An ABC transmembrane type-2 domain is found at 381 to 644 (KGFPWVTVIQ…TITYVQLLQV (264 aa)). A helical transmembrane segment spans residues 388 to 408 (VIQAIITVILATAVGTAFRVL). At 409 to 420 (KNDCIEVQMRAG) the chain is on the extracellular side. Residues 421-441 (LLYLLTIFQCITSVSAGELFV) traverse the membrane as a helical segment. Residues 442–469 (IDRVRFLHEHTSGYYRVSSYFFGKLLAE) lie on the Cytoplasmic side of the membrane. The helical transmembrane segment at 470–490 (LIPRRLLPSTVFSLITYVIAG) threads the bilayer. Topologically, residues 491 to 498 (VKMSMKCF) are extracellular. Residues 499-519 (FTMICTIMVLAYSASSLPLSI) form a helical membrane-spanning segment. Residues 520-527 (GAGENAVA) are Cytoplasmic-facing. The helical transmembrane segment at 528 to 548 (VPTLLVTIYFVFMLFFSGLSL) threads the bilayer. Topologically, residues 549–623 (YSGSFLPKLS…LSSWGFWENH (75 aa)) are extracellular. A helical membrane pass occupies residues 624–644 (LALVCTMIILLTITYVQLLQV). Over 645–648 (KNIR) the chain is Cytoplasmic.

This sequence belongs to the ABC transporter superfamily. ABCG family. Eye pigment precursor importer (TC 3.A.1.204) subfamily. As to quaternary structure, may dimerize with another subunit to form a functional transporter. Highest levels of expression in thymus and spleen. Detected in lung and small intestine.

The protein localises to the membrane. This Mus musculus (Mouse) protein is ATP-binding cassette sub-family G member 3 (Abcg3).